Consider the following 358-residue polypeptide: MDLMSFKEREISKKDCVELFEDTENFFDILKLADSIRKDIVGDTVTFVKNTNIETTNVCTMGCKFCAFSVSKNSPEAFKLDADEIAKKAVIAKKSGLTEVTIHGGIHPDVDTHFQVETINKVNSATSKLGGIYTHAYSPQEILNGAENAGLSIKEALKMLNEAGLRTIPGTAAEILDDEVRSDICPLKMSTKKWIDIMKTAHKTGIKTTSTIIYGHVEEYKHIVDHLSILKELQEETGGITEFIPMSFLHENTPLYKSGRVTDGASGLYELKLYAIARILFKESIKNIQAPRVKIGTKLSQLILKSGANDLGGTLVEDKVSKAAGSIYEDASVDLMKNAITSIGRIPKERTTLYEIIE.

In terms of domain architecture, Radical SAM core spans 45–292 (VTFVKNTNIE…ESIKNIQAPR (248 aa)). [4Fe-4S] cluster contacts are provided by cysteine 59, cysteine 63, and cysteine 66.

It belongs to the radical SAM superfamily. CofH family. As to quaternary structure, consists of two subunits, CofG and CofH. [4Fe-4S] cluster serves as cofactor.

It catalyses the reaction 5-amino-6-(D-ribitylamino)uracil + L-tyrosine + S-adenosyl-L-methionine = 5-amino-5-(4-hydroxybenzyl)-6-(D-ribitylimino)-5,6-dihydrouracil + 2-iminoacetate + 5'-deoxyadenosine + L-methionine + H(+). It participates in cofactor biosynthesis; coenzyme F0 biosynthesis. Its function is as follows. Catalyzes the radical-mediated synthesis of 5-amino-5-(4-hydroxybenzyl)-6-(D-ribitylimino)-5,6-dihydrouracil from 5-amino-6-(D-ribitylamino)uracil and L-tyrosine. The chain is 5-amino-6-(D-ribitylamino)uracil--L-tyrosine 4-hydroxyphenyl transferase 2 from Methanococcus maripaludis (strain DSM 14266 / JCM 13030 / NBRC 101832 / S2 / LL).